The sequence spans 444 residues: Phosphoglucosamine mutase (444 aa).

Catalysis depends on Ser-100, which acts as the Phosphoserine intermediate. Ser-100, Asp-234, Asp-236, and Asp-238 together coordinate Mg(2+). Residue Ser-100 is modified to Phosphoserine.

The protein belongs to the phosphohexose mutase family. The cofactor is Mg(2+). Activated by phosphorylation.

The catalysed reaction is alpha-D-glucosamine 1-phosphate = D-glucosamine 6-phosphate. Its function is as follows. Catalyzes the conversion of glucosamine-6-phosphate to glucosamine-1-phosphate. The chain is Phosphoglucosamine mutase from Rubrobacter xylanophilus (strain DSM 9941 / JCM 11954 / NBRC 16129 / PRD-1).